The sequence spans 84 residues: Three-finger toxin MALT0070C (84 aa).

The first 21 residues, 1–21 (MKTLLLTLVVVTIVCLDLGYT), serve as a signal peptide directing secretion. 4 cysteine pairs are disulfide-bonded: C24–C43, C36–C60, C64–C71, and C72–C77.

The protein belongs to the three-finger toxin family. Short-chain subfamily. Expressed by the venom gland.

The protein resides in the secreted. This Micrurus altirostris (Uruguayan coral snake) protein is Three-finger toxin MALT0070C.